A 719-amino-acid chain; its full sequence is Probable phosphatidylinositol phosphate kinase DDB_G0267588 (719 aa).

The disordered stretch occupies residues Val47–Asn261. Composition is skewed to low complexity over residues Thr57 to Thr77 and Ile87 to Ile104. The span at Ala107–Ser129 shows a compositional bias: basic and acidic residues. Residues Phe172–Val184 show a composition bias toward polar residues. Residues Thr199–Asn217 show a composition bias toward low complexity. 2 stretches are compositionally biased toward polar residues: residues Lys218 to Ser228 and Ala248 to Asn261. A Phosphothreonine modification is found at Thr262. The PIPK domain maps to Asn316 to Ile718. The segment at Arg579–Lys638 is disordered. A compositionally biased stretch (low complexity) spans Gln606–Gly619.

Phosphorylated at Thr-262 by pkgB.

In terms of biological role, may be involved in signaling events that underlie chemotaxis via the chemoattractant-mediated pkgB phosphorylation. This Dictyostelium discoideum (Social amoeba) protein is Probable phosphatidylinositol phosphate kinase DDB_G0267588.